A 496-amino-acid polypeptide reads, in one-letter code: DEAD-box ATP-dependent RNA helicase 38 (496 aa).

Residues 1-91 (MADTVEKVPT…SGDTPYTSAS (91 aa)) form a disordered region. Residue Ala2 is modified to N-acetylalanine. Positions 7 to 25 (KVPTVVESSSSSTVEASNS) are enriched in low complexity. The segment covering 27 to 40 (EKTEPTTEKKKWGD) has biased composition (basic and acidic residues). The span at 41-51 (VEDDDDEEEAV) shows a compositional bias: acidic residues. The span at 78–91 (KAVTSGDTPYTSAS) shows a compositional bias: polar residues. The Q motif motif lies at 91–120 (SRFEDLNLSPELMKGLYVEMKFEKPSKIQA). The region spanning 125-301 (MIMTPPHKHL…ARTVKDPNQL (177 aa)) is the Helicase ATP-binding domain. Position 138-145 (138-145 (AHNGSGKT)) interacts with ATP. A DEAD box motif is present at residues 245-248 (DEAD). The Helicase C-terminal domain occupies 329–483 (VIKDQIMELG…EIKSWNSEEE (155 aa)).

The protein belongs to the DEAD box helicase family. DDX19/DBP5 subfamily. In terms of assembly, interacts with NUP214 (via N-terminus). In terms of tissue distribution, constitutively expressed.

It is found in the cytoplasm. The protein resides in the nucleus. The enzyme catalyses ATP + H2O = ADP + phosphate + H(+). Its function is as follows. ATP-dependent RNA helicase essential for mRNA export from the nucleus. Plays an important role in the positive regulation of CBF/DREB transcription factors. The polypeptide is DEAD-box ATP-dependent RNA helicase 38 (RH38) (Arabidopsis thaliana (Mouse-ear cress)).